The sequence spans 72 residues: Translation initiation factor IF-1 (72 aa).

The region spanning 1–72 (MSKEDAIEVM…TRGRIVYRYK (72 aa)) is the S1-like domain.

The protein belongs to the IF-1 family. In terms of assembly, component of the 30S ribosomal translation pre-initiation complex which assembles on the 30S ribosome in the order IF-2 and IF-3, IF-1 and N-formylmethionyl-tRNA(fMet); mRNA recruitment can occur at any time during PIC assembly.

Its subcellular location is the cytoplasm. One of the essential components for the initiation of protein synthesis. Stabilizes the binding of IF-2 and IF-3 on the 30S subunit to which N-formylmethionyl-tRNA(fMet) subsequently binds. Helps modulate mRNA selection, yielding the 30S pre-initiation complex (PIC). Upon addition of the 50S ribosomal subunit IF-1, IF-2 and IF-3 are released leaving the mature 70S translation initiation complex. The sequence is that of Translation initiation factor IF-1 from Koribacter versatilis (strain Ellin345).